A 374-amino-acid polypeptide reads, in one-letter code: Ribosomal RNA large subunit methyltransferase G (374 aa).

This sequence belongs to the methyltransferase superfamily. RlmG family.

It is found in the cytoplasm. The catalysed reaction is guanosine(1835) in 23S rRNA + S-adenosyl-L-methionine = N(2)-methylguanosine(1835) in 23S rRNA + S-adenosyl-L-homocysteine + H(+). Its function is as follows. Specifically methylates the guanine in position 1835 (m2G1835) of 23S rRNA. The polypeptide is Ribosomal RNA large subunit methyltransferase G (Pseudomonas fluorescens (strain ATCC BAA-477 / NRRL B-23932 / Pf-5)).